A 205-amino-acid chain; its full sequence is Ribosomal RNA small subunit methyltransferase G (205 aa).

S-adenosyl-L-methionine-binding positions include Gly66, Phe71, 119 to 120, and Arg135; that span reads IE.

Belongs to the methyltransferase superfamily. RNA methyltransferase RsmG family.

The protein localises to the cytoplasm. The catalysed reaction is guanosine(527) in 16S rRNA + S-adenosyl-L-methionine = N(7)-methylguanosine(527) in 16S rRNA + S-adenosyl-L-homocysteine. In terms of biological role, specifically methylates the N7 position of guanine in position 527 of 16S rRNA. The sequence is that of Ribosomal RNA small subunit methyltransferase G from Rhizobium rhizogenes (strain K84 / ATCC BAA-868) (Agrobacterium radiobacter).